The chain runs to 147 residues: Plasminogen receptor (KT) (147 aa).

The Extracellular portion of the chain corresponds to Met-1–Glu-52. The helical transmembrane segment at Phe-53 to Leu-73 threads the bilayer. The Cytoplasmic portion of the chain corresponds to Lys-74–Pro-78. A helical transmembrane segment spans residues Ala-79–Tyr-99. Residues Gly-100–Lys-147 are Extracellular-facing.

In terms of assembly, interacts with PLAT. Interacts with PLAUR. In terms of tissue distribution, expressed in monocytes; detected in differentiated monocytes but not in progenitor cells. Expressed in adrenal medulla and hippocampus.

It is found in the cell membrane. In terms of biological role, receptor for plasminogen. Regulates urokinase plasminogen activator-dependent and stimulates tissue-type plasminogen activator-dependent cell surface plasminogen activation. Proposed to be part of a local catecholaminergic cell plasminogen activation system that regulates neuroendocrine prohormone processing. Involved in regulation of inflammatory response; regulates monocyte chemotactic migration and matrix metalloproteinase activation, such as of MMP2 and MMP9. In Mus musculus (Mouse), this protein is Plasminogen receptor (KT) (Plgrkt).